Consider the following 422-residue polypeptide: Serine--tRNA ligase (422 aa).

Thr231 to Glu233 is an L-serine binding site. Arg262–Glu264 is an ATP binding site. Residue Glu285 participates in L-serine binding. Position 349 to 352 (Glu349 to Ser352) interacts with ATP. Ser384 contacts L-serine.

This sequence belongs to the class-II aminoacyl-tRNA synthetase family. Type-1 seryl-tRNA synthetase subfamily. Homodimer. The tRNA molecule binds across the dimer.

It localises to the cytoplasm. The catalysed reaction is tRNA(Ser) + L-serine + ATP = L-seryl-tRNA(Ser) + AMP + diphosphate + H(+). It catalyses the reaction tRNA(Sec) + L-serine + ATP = L-seryl-tRNA(Sec) + AMP + diphosphate + H(+). It participates in aminoacyl-tRNA biosynthesis; selenocysteinyl-tRNA(Sec) biosynthesis; L-seryl-tRNA(Sec) from L-serine and tRNA(Sec): step 1/1. Catalyzes the attachment of serine to tRNA(Ser). Is also able to aminoacylate tRNA(Sec) with serine, to form the misacylated tRNA L-seryl-tRNA(Sec), which will be further converted into selenocysteinyl-tRNA(Sec). This is Serine--tRNA ligase from Mycoplasma mycoides subsp. mycoides SC (strain CCUG 32753 / NCTC 10114 / PG1).